Here is a 263-residue protein sequence, read N- to C-terminus: Small ribosomal subunit protein eS4 (263 aa).

Residues 42-104 (LPLIIFLRNK…TGENFRLIYD (63 aa)) enclose the S4 RNA-binding domain. Lys230 is covalently cross-linked (Glycyl lysine isopeptide (Lys-Gly) (interchain with G-Cter in SUMO2)). Lys233 carries the N6-acetyllysine modification.

This sequence belongs to the eukaryotic ribosomal protein eS4 family. As to quaternary structure, component of the small ribosomal subunit. Part of the small subunit (SSU) processome, composed of more than 70 proteins and the RNA chaperone small nucleolar RNA (snoRNA) U3. Identified in a IGF2BP1-dependent mRNP granule complex containing untranslated mRNAs.

Its subcellular location is the cytoplasm. The protein localises to the nucleus. It localises to the nucleolus. Functionally, component of the small ribosomal subunit. The ribosome is a large ribonucleoprotein complex responsible for the synthesis of proteins in the cell. Part of the small subunit (SSU) processome, first precursor of the small eukaryotic ribosomal subunit. During the assembly of the SSU processome in the nucleolus, many ribosome biogenesis factors, an RNA chaperone and ribosomal proteins associate with the nascent pre-rRNA and work in concert to generate RNA folding, modifications, rearrangements and cleavage as well as targeted degradation of pre-ribosomal RNA by the RNA exosome. This is Small ribosomal subunit protein eS4 (RPS4X) from Oryctolagus cuniculus (Rabbit).